Consider the following 264-residue polypeptide: Type 1 encapsulin shell protein (264 aa).

This sequence belongs to the encapsulin family. Family 1 subfamily. Forms hollow shells composed of 60 subunits. Monomers probably form pentamers which assemble into the shell. There are 12 pores where the pentamers meet as well as 3-fold axis channels and dimer channels; none are larger than 3-4 Angstroms in diameter. The N-terminus of the protein is inside the shell, the C-terminus is outside.

Its subcellular location is the encapsulin nanocompartment. Functionally, shell component of a type 1 encapsulin nanocompartment. Assembles into proteinaceous shells 21-24 nm in diameter. Empty organelles can be expressed in E.coli. Cargo proteins (DypB) are targeted to the interior via their C-terminal extensions. This Rhodococcus erythropolis (strain PR4 / NBRC 100887) protein is Type 1 encapsulin shell protein.